Reading from the N-terminus, the 345-residue chain is Protein GAMETE CELL DEFECTIVE 1, mitochondrial (345 aa).

The transit peptide at 1 to 43 directs the protein to the mitochondrion; it reads MLALRKTLLHGRLPAAPPAAAAAAIASRIPALLRRLSSSPGDG. The interval 36–81 is disordered; it reads LSSSPGDGQGGDEWGSSWSTGITKEHFDGSDAAVGRPVTSPSKPVS.

Expressed in roots, stems, leaves and florets.

The protein localises to the mitochondrion. In terms of biological role, essential for fertility (male and female gametophyte functions and development). Required for the integrity of female gametic mitochondria. Involved in embryo apical-basal patterning, and particularly dorsal-ventral patterning, during early embryogenesis, and endosperm free nucleus positioning and development as well as early endosperm development, probably by modulating the expression pattern of related genes (e.g. AL1, MYB3/AL2, CYP78A13/GE, PNH1, HAZ1, MPK6 and OSH1). Has function in triggering of endosperm programmed cell death (PCD) leading to syncytial endosperm cellularization and starchy endosperm cell maturation. Implicated in central vacuole dynamics necessary for microspore development leading to pollen production, and for pollen development and germination. In Oryza sativa subsp. japonica (Rice), this protein is Protein GAMETE CELL DEFECTIVE 1, mitochondrial.